A 210-amino-acid polypeptide reads, in one-letter code: Glutathione S-transferase 3 (210 aa).

The region spanning 1-80 (MDFYYLPLSA…YLVEKYGKQN (80 aa)) is the GST N-terminal domain. Residues Ser9, 50 to 52 (HTI), and 64 to 66 (ESR) contribute to the glutathione site. Residues 87-208 (CPKKRALINQ…AGCLEMKKYF (122 aa)) enclose the GST C-terminal domain.

This sequence belongs to the GST superfamily. Theta family. Homodimer.

It catalyses the reaction RX + glutathione = an S-substituted glutathione + a halide anion + H(+). Conjugation of reduced glutathione to a wide number of exogenous and endogenous hydrophobic electrophiles. This is Glutathione S-transferase 3 (Gst3) from Musca domestica (House fly).